Consider the following 126-residue polypeptide: Large ribosomal subunit protein bL20c (126 aa).

This sequence belongs to the bacterial ribosomal protein bL20 family.

Its subcellular location is the plastid. The protein localises to the chloroplast. In terms of biological role, binds directly to 23S ribosomal RNA and is necessary for the in vitro assembly process of the 50S ribosomal subunit. It is not involved in the protein synthesizing functions of that subunit. The polypeptide is Large ribosomal subunit protein bL20c (Guizotia abyssinica (Niger)).